A 143-amino-acid chain; its full sequence is Large ribosomal subunit protein uL15 (143 aa).

A disordered region spans residues 1–45 (MLLNTVQPGVGAKHAKRRVGRGIGSGLGKTCGRGHKGQKSRAGGF). Gly residues predominate over residues 21–31 (RGIGSGLGKTC).

This sequence belongs to the universal ribosomal protein uL15 family. As to quaternary structure, part of the 50S ribosomal subunit.

Binds to the 23S rRNA. The protein is Large ribosomal subunit protein uL15 of Chromobacterium violaceum (strain ATCC 12472 / DSM 30191 / JCM 1249 / CCUG 213 / NBRC 12614 / NCIMB 9131 / NCTC 9757 / MK).